The primary structure comprises 184 residues: NADH-quinone oxidoreductase subunit B (184 aa).

Positions 63, 64, 128, and 158 each coordinate [4Fe-4S] cluster.

This sequence belongs to the complex I 20 kDa subunit family. As to quaternary structure, NDH-1 is composed of 14 different subunits. Subunits NuoB, C, D, E, F, and G constitute the peripheral sector of the complex. Requires [4Fe-4S] cluster as cofactor.

The protein resides in the cell inner membrane. The enzyme catalyses a quinone + NADH + 5 H(+)(in) = a quinol + NAD(+) + 4 H(+)(out). Functionally, NDH-1 shuttles electrons from NADH, via FMN and iron-sulfur (Fe-S) centers, to quinones in the respiratory chain. The immediate electron acceptor for the enzyme in this species is believed to be ubiquinone. Couples the redox reaction to proton translocation (for every two electrons transferred, four hydrogen ions are translocated across the cytoplasmic membrane), and thus conserves the redox energy in a proton gradient. In Xanthomonas axonopodis pv. citri (strain 306), this protein is NADH-quinone oxidoreductase subunit B.